A 274-amino-acid polypeptide reads, in one-letter code: Transcription factor MYB58 (274 aa).

HTH myb-type domains lie at 11 to 63 (KTKV…INYL) and 64 to 118 (RPDV…KKRL). DNA-binding regions (H-T-H motif) lie at residues 39-63 (WRSLPKQAGLLRCGKSCRLRWINYL) and 91-114 (WSKIASKLPGRTDNEIKNVWHTHL). 2 disordered regions span residues 121–160 (ETNLNADEAGSKGSLNEEENSQESSPNASMSFAGSNISSK) and 237–274 (SELGLEENDNQQQQQQHKQGTEDEHSSSLLESYELLIH). Low complexity predominate over residues 263–274 (SSLLESYELLIH).

In terms of tissue distribution, expressed in leaves. Specifically expressed in fibers and vessels undergoing secondary wall thickening, especially in inflorescence stems.

The protein resides in the nucleus. Its function is as follows. Transcriptional activator that binds DNA to the AC cis-elements 5'-ACCTACC-3', 5'-ACCAACC-3' and 5'-ACCTAAC-3' of promoters and specifically activates lignin biosynthetic genes during secondary wall formation mediated by SND1. The chain is Transcription factor MYB58 from Arabidopsis thaliana (Mouse-ear cress).